A 1298-amino-acid chain; its full sequence is Protein broad-minded (1298 aa).

Residues Tyr1171–Arg1283 enclose the Rab-GAP TBC domain.

As to quaternary structure, interacts with cdk20, which promotes cdk20 stability and function.

The protein localises to the cytoplasm. Its subcellular location is the cell projection. It is found in the cilium. Required for high-level Shh responses in the developing neural tube. Together with cdk20, controls the structure of the primary cilium by coordinating assembly of the ciliary membrane and axoneme, allowing gli2 to be properly activated in response to SHH signaling. This chain is Protein broad-minded (tbc1d32), found in Danio rerio (Zebrafish).